The chain runs to 133 residues: FPRL1 inhibitory protein (133 aa).

The first 28 residues, 1–28, serve as a signal peptide directing secretion; the sequence is MKKNITKTIIASTVIAAGLLTQTNDAKA.

The protein belongs to the CHIPS/FLIPr family.

Its subcellular location is the secreted. In terms of biological role, may be involved in countering the first line of host defense mechanisms. Impairs the leukocyte response to FPRL1 agonists by binding directly to host FPRL1. The sequence is that of FPRL1 inhibitory protein (flr) from Staphylococcus aureus (strain Mu50 / ATCC 700699).